Reading from the N-terminus, the 253-residue chain is uncharacterized protein (253 aa).

Residues I17, S36, D62, N89, Y158, K162, V191, and T193 each contribute to the NADP(+) site. Y158 functions as the Proton donor in the catalytic mechanism. Residue K162 is the Lowers pKa of active site Tyr of the active site.

This sequence belongs to the short-chain dehydrogenases/reductases (SDR) family.

It is found in the cytoplasm. The protein resides in the nucleus. This is an uncharacterized protein from Schizosaccharomyces pombe (strain 972 / ATCC 24843) (Fission yeast).